The chain runs to 203 residues: Elongation factor Ts (203 aa).

Positions 80–83 (TDFV) are involved in Mg(2+) ion dislocation from EF-Tu.

It belongs to the EF-Ts family.

It is found in the cytoplasm. Its function is as follows. Associates with the EF-Tu.GDP complex and induces the exchange of GDP to GTP. It remains bound to the aminoacyl-tRNA.EF-Tu.GTP complex up to the GTP hydrolysis stage on the ribosome. In Moorella thermoacetica (strain ATCC 39073 / JCM 9320), this protein is Elongation factor Ts.